A 419-amino-acid polypeptide reads, in one-letter code: D-mannonate dehydratase (419 aa).

Substrate-binding residues include Asn-54 and His-139. Tyr-176 (proton donor/acceptor) is an active-site residue. Asp-227 contacts Mg(2+). The Proton donor/acceptor role is filled by His-229. Residues Glu-253 and Glu-279 each coordinate Mg(2+). Residues Glu-279, Arg-300, His-329, Asp-333, and Glu-356 each coordinate substrate.

It belongs to the mandelate racemase/muconate lactonizing enzyme family. GalD subfamily. Mg(2+) is required as a cofactor.

The enzyme catalyses D-mannonate = 2-dehydro-3-deoxy-D-gluconate + H2O. The protein operates within carbohydrate metabolism; pentose and glucuronate interconversion. Its function is as follows. Catalyzes the dehydration of D-mannonate. Has no detectable activity with a panel of 70 other acid sugars (in vitro). This chain is D-mannonate dehydratase, found in Xanthomonas oryzae pv. oryzicola (strain BLS256).